The sequence spans 324 residues: Olfactory receptor 5A2 (324 aa).

The Extracellular segment spans residues 1-26 (MAVGRNNTIVTKFILLGLSDHPQMKI). N6 is a glycosylation site (N-linked (GlcNAc...) asparagine). A helical transmembrane segment spans residues 27-47 (FLFMLFLGLYLLTLAWNLSLI). Residues 48–55 (ALIKMDSH) lie on the Cytoplasmic side of the membrane. The helical transmembrane segment at 56-76 (LHMPMYFFLSNLSFLDICYVS) threads the bilayer. Over 77–100 (STAPKMLSDIITEQKTISFVGCAT) the chain is Extracellular. C98 and C190 form a disulfide bridge. Residues 101–121 (QYFVFCGMGLTECFLLAAMAY) form a helical membrane-spanning segment. Residues 122-134 (DRYAAICNPLLYT) lie on the Cytoplasmic side of the membrane. The chain crosses the membrane as a helical span at residues 135–155 (VLISHTLCLKMVVGAYVGGFL). Over 156 to 197 (SSFIETYSVYQHDFCGPYMINHFFCDLPPVLALSCSDTFTSE) the chain is Extracellular. The helical transmembrane segment at 198–218 (VVTFIVSVVVGIVSVLVVLIS) threads the bilayer. Residues 219-238 (YGYIVAAVVKISSATGRTKA) lie on the Cytoplasmic side of the membrane. The helical transmembrane segment at 239-259 (FSTCASHLTAVTLFYGSGFFM) threads the bilayer. Over 260-272 (YMRPSSSYSLNRD) the chain is Extracellular. A helical membrane pass occupies residues 273–293 (KVVSIFYALVIPVVNPIIYSF). Over 294-324 (RNKEIKNAMRKAMERDPGISHGGPFIFMTLG) the chain is Cytoplasmic.

It belongs to the G-protein coupled receptor 1 family.

The protein resides in the cell membrane. Functionally, odorant receptor. In Homo sapiens (Human), this protein is Olfactory receptor 5A2 (OR5A2).